Here is a 552-residue protein sequence, read N- to C-terminus: Urocanate hydratase (552 aa).

NAD(+)-binding positions include 49-50 (GG), glutamine 127, 173-175 (GMG), glutamate 193, arginine 198, 239-240 (NA), 260-264 (QTSAH), 270-271 (YV), and tyrosine 319. The active site involves cysteine 407. An NAD(+)-binding site is contributed by glycine 489.

This sequence belongs to the urocanase family. Composed of at least two subunits. It depends on NAD(+) as a cofactor.

It is found in the cytoplasm. It carries out the reaction 4-imidazolone-5-propanoate = trans-urocanate + H2O. The protein operates within amino-acid degradation; L-histidine degradation into L-glutamate; N-formimidoyl-L-glutamate from L-histidine: step 2/3. Functionally, catalyzes the conversion of urocanate to 4-imidazolone-5-propionate. The polypeptide is Urocanate hydratase (Bacillus subtilis (strain 168)).